The chain runs to 136 residues: MLSPKRTKFRKPHRGHLRGKATRGNKIVFGDFALQAQEPCWITSRQIEAGRRVLTRYVRRGGKLWIRIFPDKAVTMRPAGTRMGSGKGAPDYWVAVVHPGKILYEMQGVSETIARQAMRIAAYKMPVKTKFLTKTV.

Belongs to the universal ribosomal protein uL16 family. Part of the 50S ribosomal subunit.

The protein localises to the plastid. The protein resides in the chloroplast. This chain is Large ribosomal subunit protein uL16c, found in Chlamydomonas reinhardtii (Chlamydomonas smithii).